The following is a 129-amino-acid chain: Insulin-like growth factor 2 (129 aa).

The N-terminal stretch at 1-24 is a signal peptide; it reads MGVPMGKSLLAPLTFLALASCCFA. The interval 25–52 is b; the sequence is AYRPSETLCGGELVDTLQFVCGDRGFYF. 3 disulfide bridges follow: C33-C72, C45-C85, and C71-C76. The interval 53–65 is c; that stretch reads SRPASRVSRRSSR. The segment at 66–86 is a; that stretch reads GIVEECCFRSCDLALLETYCA. The d stretch occupies residues 87 to 92; that stretch reads TPAKSE. A propeptide spans 93–129 (e peptide); the sequence is RDVSTPPTVLPDNFPRYPVGKFFQYDTWKQSAQRLRR.

This sequence belongs to the insulin family. Interacts with MYORG; this interaction is required for IGF2 secretion. Interacts with integrins ITGAV:ITGB3 and ITGA6:ITGB4; integrin-binding is required for IGF2 signaling. Proteolytically processed by PCSK4, proIGF2 is cleaved at Arg-129 and Arg-92 to generate big-IGF2 and mature IGF2.

The protein resides in the secreted. Functionally, the insulin-like growth factors possess growth-promoting activity. Major fetal growth hormone in mammals. Plays a key role in regulating fetoplacental development. IGF2 is influenced by placental lactogen. Also involved in tissue differentiation. In adults, involved in glucose metabolism in adipose tissue, skeletal muscle and liver. Acts as a ligand for integrin which is required for IGF2 signaling. Positively regulates myogenic transcription factor MYOD1 function by facilitating the recruitment of transcriptional coactivators, thereby controlling muscle terminal differentiation. Inhibits myoblast differentiation and modulates metabolism via increasing the mitochondrial respiration rate. Its function is as follows. Preptin undergoes glucose-mediated co-secretion with insulin, and acts as a physiological amplifier of glucose-mediated insulin secretion. Exhibits osteogenic properties by increasing osteoblast mitogenic activity through phosphoactivation of MAPK1 and MAPK3. This is Insulin-like growth factor 2 from Neovison vison (American mink).